A 332-amino-acid chain; its full sequence is Eukaryotic translation initiation factor 3 subunit H (332 aa).

The region spanning 18-153 (VQVDGLTVLK…LKAFRLSDEM (136 aa)) is the MPN domain. Residues 251 to 285 (QQQKENYLQRRQQENQSRIQRGEDPLPDEDLSKMF) form a disordered region.

Belongs to the eIF-3 subunit H family. In terms of assembly, component of the eukaryotic translation initiation factor 3 (eIF-3) complex.

The protein localises to the cytoplasm. Functionally, component of the eukaryotic translation initiation factor 3 (eIF-3) complex, which is involved in protein synthesis of a specialized repertoire of mRNAs and, together with other initiation factors, stimulates binding of mRNA and methionyl-tRNAi to the 40S ribosome. The eIF-3 complex specifically targets and initiates translation of a subset of mRNAs involved in cell proliferation. This chain is Eukaryotic translation initiation factor 3 subunit H, found in Nematostella vectensis (Starlet sea anemone).